The chain runs to 549 residues: Glucose-6-phosphate isomerase (549 aa).

N6-acetyllysine is present on residues Lys80, Lys228, and Lys234. The active-site Proton donor is Glu355. Residues His386 and Lys514 contribute to the active site.

The protein belongs to the GPI family.

The protein localises to the cytoplasm. It carries out the reaction alpha-D-glucose 6-phosphate = beta-D-fructose 6-phosphate. It participates in carbohydrate biosynthesis; gluconeogenesis. The protein operates within carbohydrate degradation; glycolysis; D-glyceraldehyde 3-phosphate and glycerone phosphate from D-glucose: step 2/4. Functionally, catalyzes the reversible isomerization of glucose-6-phosphate to fructose-6-phosphate. This is Glucose-6-phosphate isomerase from Shigella flexneri.